The sequence spans 671 residues: Zinc finger and BTB domain-containing protein 16-A (671 aa).

The BTB domain occupies 34–96 (CDVVIMVDSQ…AYTATLQAKV (63 aa)). Disordered stretches follow at residues 130 to 167 (ENDT…TEES) and 248 to 289 (VDES…RSSV). Basic and acidic residues predominate over residues 270–279 (RSGEPDKNRD). Thr283 bears the Phosphothreonine mark. 9 C2H2-type zinc fingers span residues 401 to 423 (ERCN…RKLH), 429 to 451 (YGCE…LLSH), 458 to 480 (IVCD…RQIH), 487 to 509 (IFCL…MEVH), 515 to 537 (YICS…LRSH), 544 to 566 (FECE…KRIH), 572 to 594 (YECN…YRVH), 600 to 622 (FECK…LRTH), and 628 to 650 (YQCT…MKGH).

This sequence belongs to the krueppel C2H2-type zinc-finger protein family. Interacts with btbd6a (via BTB domain). Post-translationally, polyubiquitinated, leading to its proteasomal degradation. During early stages of primary neurogenesis, expressed in the neural epithelium, with highest levels in the forebrain and midbrain. Also expressed in a posterior-to-anterior gradient in the caudal neural plate at the 3-6 somite stage.

The protein localises to the nucleus. It localises to the cytoplasm. Its pathway is protein modification; protein ubiquitination. Probable transcription factor. Probable substrate-recognition component of an E3 ubiquitin-protein ligase complex which mediates the ubiquitination and subsequent proteasomal degradation of target proteins. Inhibits neurogenesis. The sequence is that of Zinc finger and BTB domain-containing protein 16-A from Danio rerio (Zebrafish).